We begin with the raw amino-acid sequence, 394 residues long: Elongation factor Tu 2 (394 aa).

The tr-type G domain occupies 10–204 (KPHVNVGTIG…FLDSYIPEPE (195 aa)). The G1 stretch occupies residues 19–26 (GHVDHGKT). GTP is bound at residue 19 to 26 (GHVDHGKT). T26 provides a ligand contact to Mg(2+). The G2 stretch occupies residues 60 to 64 (GITIN). The G3 stretch occupies residues 81-84 (DCPG). GTP contacts are provided by residues 81–85 (DCPGH) and 136–139 (NKCD). Residues 136–139 (NKCD) form a G4 region. The interval 174 to 176 (SAL) is G5.

Belongs to the TRAFAC class translation factor GTPase superfamily. Classic translation factor GTPase family. EF-Tu/EF-1A subfamily. In terms of assembly, monomer.

The protein resides in the cytoplasm. It catalyses the reaction GTP + H2O = GDP + phosphate + H(+). GTP hydrolase that promotes the GTP-dependent binding of aminoacyl-tRNA to the A-site of ribosomes during protein biosynthesis. This Escherichia coli O139:H28 (strain E24377A / ETEC) protein is Elongation factor Tu 2.